The primary structure comprises 189 residues: Protein GrpE (189 aa).

The segment covering 1-12 (MDKKKHGSHAGA) has biased composition (basic residues). The interval 1 to 36 (MDKKKHGSHAGAHHTDEPAAETVAPAAEGAPAAADR) is disordered. Residues 20-34 (AETVAPAAEGAPAAA) are compositionally biased toward low complexity.

Belongs to the GrpE family. In terms of assembly, homodimer.

Its subcellular location is the cytoplasm. Functionally, participates actively in the response to hyperosmotic and heat shock by preventing the aggregation of stress-denatured proteins, in association with DnaK and GrpE. It is the nucleotide exchange factor for DnaK and may function as a thermosensor. Unfolded proteins bind initially to DnaJ; upon interaction with the DnaJ-bound protein, DnaK hydrolyzes its bound ATP, resulting in the formation of a stable complex. GrpE releases ADP from DnaK; ATP binding to DnaK triggers the release of the substrate protein, thus completing the reaction cycle. Several rounds of ATP-dependent interactions between DnaJ, DnaK and GrpE are required for fully efficient folding. The polypeptide is Protein GrpE (Geobacter metallireducens (strain ATCC 53774 / DSM 7210 / GS-15)).